A 255-amino-acid polypeptide reads, in one-letter code: Phosphate import ATP-binding protein PstB (255 aa).

The ABC transporter domain occupies 8-250; sequence IKSSNLNVHY…PGNKMTQDYI (243 aa). Residue 40–47 coordinates ATP; it reads GPSGCGKS.

Belongs to the ABC transporter superfamily. Phosphate importer (TC 3.A.1.7) family. In terms of assembly, the complex is composed of two ATP-binding proteins (PstB), two transmembrane proteins (PstC and PstA) and a solute-binding protein (PstS).

The protein localises to the cell inner membrane. It carries out the reaction phosphate(out) + ATP + H2O = ADP + 2 phosphate(in) + H(+). Functionally, part of the ABC transporter complex PstSACB involved in phosphate import. Responsible for energy coupling to the transport system. This chain is Phosphate import ATP-binding protein PstB, found in Pelagibacter ubique (strain HTCC1062).